The chain runs to 208 residues: Flavin-dependent thymidylate synthase (208 aa).

Residues 1–208 (MEVICKHYTP…QYLFEDCLKH (208 aa)) enclose the ThyX domain. Residues serine 50 and 74–76 (RHR) contribute to the FAD site. DUMP-binding positions include 71-74 (ELSR), 84-86 (SSR), and lysine 147. Positions 74–84 (RHRIASLSVKS) match the ThyX motif motif. Residues 163 to 165 (NAR) and asparagine 169 contribute to the FAD site. Arginine 174 serves as a coordination point for dUMP. Arginine 174 (involved in ionization of N3 of dUMP, leading to its activation) is an active-site residue.

Belongs to the thymidylate synthase ThyX family. Homotetramer. FAD is required as a cofactor.

It carries out the reaction dUMP + (6R)-5,10-methylene-5,6,7,8-tetrahydrofolate + NADPH + H(+) = dTMP + (6S)-5,6,7,8-tetrahydrofolate + NADP(+). Its pathway is pyrimidine metabolism; dTTP biosynthesis. Catalyzes the reductive methylation of 2'-deoxyuridine-5'-monophosphate (dUMP) to 2'-deoxythymidine-5'-monophosphate (dTMP) while utilizing 5,10-methylenetetrahydrofolate (mTHF) as the methyl donor, and NAD(P)H and FADH(2) as the reductant. This is Flavin-dependent thymidylate synthase from Helicobacter pylori (strain ATCC 700392 / 26695) (Campylobacter pylori).